Here is a 208-residue protein sequence, read N- to C-terminus: dITP/XTP pyrophosphatase (208 aa).

A substrate-binding site is contributed by 17–22 (SNNPGK). The Mg(2+) site is built by Asp-49 and Asp-78. The Proton acceptor role is filled by Asp-78. Substrate contacts are provided by residues Ser-79, 164–167 (FGYD), Lys-187, and 192–193 (HR).

This sequence belongs to the HAM1 NTPase family. As to quaternary structure, homodimer. The cofactor is Mg(2+).

The enzyme catalyses XTP + H2O = XMP + diphosphate + H(+). It carries out the reaction dITP + H2O = dIMP + diphosphate + H(+). The catalysed reaction is ITP + H2O = IMP + diphosphate + H(+). Pyrophosphatase that catalyzes the hydrolysis of nucleoside triphosphates to their monophosphate derivatives, with a high preference for the non-canonical purine nucleotides XTP (xanthosine triphosphate), dITP (deoxyinosine triphosphate) and ITP. Seems to function as a house-cleaning enzyme that removes non-canonical purine nucleotides from the nucleotide pool, thus preventing their incorporation into DNA/RNA and avoiding chromosomal lesions. The chain is dITP/XTP pyrophosphatase from Burkholderia pseudomallei (strain K96243).